A 326-amino-acid polypeptide reads, in one-letter code: MKSIAIIGASGYTGAQITSLINADENLMIQGLYVSENSLDKGKPLSDLYPSYSHISLSLSPLCDDAKMLIVEQADAVVLATDHAVSLHLAAWFYQKGLTVFDLSGAYRFSDVEQYPKWYGFNHEYQDVLSDAVYGLAEWNSEQIASSKMIAVPGCYPTASLTALKPIGMFLTDAFPVINAVSGVTGAGRKAQLHTSFCEVSLTPYGVLGHRHQPEIATQLGQEVIFTPHLGNFKRGILATITVQLKPESTEADVAAAYAVYDDAPLITVKQNQFPKVDDVVNTPNCHLGWKFDPETHYLVVASAIDNLMKGAASQAHQCIRIHFNY.

Cys155 is a catalytic residue.

It belongs to the NAGSA dehydrogenase family. Type 1 subfamily.

Its subcellular location is the cytoplasm. The catalysed reaction is N-acetyl-L-glutamate 5-semialdehyde + phosphate + NADP(+) = N-acetyl-L-glutamyl 5-phosphate + NADPH + H(+). It participates in amino-acid biosynthesis; L-arginine biosynthesis; N(2)-acetyl-L-ornithine from L-glutamate: step 3/4. Catalyzes the NADPH-dependent reduction of N-acetyl-5-glutamyl phosphate to yield N-acetyl-L-glutamate 5-semialdehyde. The chain is N-acetyl-gamma-glutamyl-phosphate reductase from Shewanella sediminis (strain HAW-EB3).